Reading from the N-terminus, the 616-residue chain is Dihydroxy-acid dehydratase (616 aa).

D81 provides a ligand contact to Mg(2+). C122 provides a ligand contact to [2Fe-2S] cluster. Positions 123 and 124 each coordinate Mg(2+). An N6-carboxylysine modification is found at K124. Residue C195 participates in [2Fe-2S] cluster binding. Residue E491 coordinates Mg(2+). Residue S517 is the Proton acceptor of the active site.

Belongs to the IlvD/Edd family. Homodimer. It depends on [2Fe-2S] cluster as a cofactor. The cofactor is Mg(2+).

The enzyme catalyses (2R)-2,3-dihydroxy-3-methylbutanoate = 3-methyl-2-oxobutanoate + H2O. It carries out the reaction (2R,3R)-2,3-dihydroxy-3-methylpentanoate = (S)-3-methyl-2-oxopentanoate + H2O. Its pathway is amino-acid biosynthesis; L-isoleucine biosynthesis; L-isoleucine from 2-oxobutanoate: step 3/4. It participates in amino-acid biosynthesis; L-valine biosynthesis; L-valine from pyruvate: step 3/4. In terms of biological role, functions in the biosynthesis of branched-chain amino acids. Catalyzes the dehydration of (2R,3R)-2,3-dihydroxy-3-methylpentanoate (2,3-dihydroxy-3-methylvalerate) into 2-oxo-3-methylpentanoate (2-oxo-3-methylvalerate) and of (2R)-2,3-dihydroxy-3-methylbutanoate (2,3-dihydroxyisovalerate) into 2-oxo-3-methylbutanoate (2-oxoisovalerate), the penultimate precursor to L-isoleucine and L-valine, respectively. The protein is Dihydroxy-acid dehydratase of Yersinia enterocolitica serotype O:8 / biotype 1B (strain NCTC 13174 / 8081).